The sequence spans 288 residues: MSNLCRNIKVFFKVFLYRFKQNKLNQAAGYLTYSTTLALVPLIMVFFSVFAAFPVFNEITGELKQFIFTNFAPSTGDAVGEYIDQFVNNSKQMSAVGIISLIVVALMLIHSIDRTLNSIWLDTSVRPAIFSFAIYWLILTLGPIVIATSIGISTYVTKFATYTFEQDLGLSVGIKLLSLMPFFLTWFIFTVLYMVVPNKKVSIIHSAAGALIAAVFFTLGKQAFTWYITTFPSYQLIYGAMATLPIMLLWIQLSWTAVLLGAQLSAVLADMRSLDDSNIQIEKMKEEK.

6 helical membrane passes run 36–56 (TLAL…FPVF), 92–112 (QMSA…IHSI), 127–147 (PAIF…IVIA), 176–196 (LLSL…YMVV), 200–220 (KVSI…FTLG), and 240–260 (AMAT…AVLL).

This sequence belongs to the UPF0761 family.

It localises to the cell inner membrane. This Histophilus somni (strain 2336) (Haemophilus somnus) protein is UPF0761 membrane protein HSM_1104.